The following is a 176-amino-acid chain: Ubiquitin-conjugating enzyme E2-20 kDa (176 aa).

Residues 1-20 (MDSDMQNQNPHTNSKNSSSA) are compositionally biased toward polar residues. Residues 1–25 (MDSDMQNQNPHTNSKNSSSAGMAVD) form a disordered region. A UBC core domain is found at 28-175 (SVTKRLRSEL…LMQRYKEIDE (148 aa)). Cysteine 113 (glycyl thioester intermediate) is an active-site residue.

It belongs to the ubiquitin-conjugating enzyme family.

The catalysed reaction is S-ubiquitinyl-[E1 ubiquitin-activating enzyme]-L-cysteine + [E2 ubiquitin-conjugating enzyme]-L-cysteine = [E1 ubiquitin-activating enzyme]-L-cysteine + S-ubiquitinyl-[E2 ubiquitin-conjugating enzyme]-L-cysteine.. The protein operates within protein modification; protein ubiquitination. Its function is as follows. Catalyzes the covalent attachment of ubiquitin to other proteins. The polypeptide is Ubiquitin-conjugating enzyme E2-20 kDa (ubc11) (Schizosaccharomyces pombe (strain 972 / ATCC 24843) (Fission yeast)).